The sequence spans 596 residues: Leucine zipper putative tumor suppressor 1 (596 aa).

A lipid anchor (N-myristoyl glycine) is attached at Gly-2. Disordered regions lie at residues 136-193 (AILH…SYQL) and 295-324 (YEER…SQKS). A compositionally biased stretch (basic and acidic residues) spans 153–162 (PPDKPKEQEL). Over residues 178–190 (SMSSLPTHSTSSS) the composition is skewed to low complexity. The stretch at 256–374 (ISTDECSIQE…SYEREKTSFG (119 aa)) forms a coiled coil. The span at 295–310 (YEERPRRCRDELEGPE) shows a compositional bias: basic and acidic residues.

This sequence belongs to the LZTS family. Binds EEF1G, TLK2 and CDK1. In terms of processing, phosphorylated on serine residues. Hyperphosphorylated by the cAMP-dependent kinase PKA during cell-cycle progression. In terms of tissue distribution, highly expressed in testis, prostate, spleen, thymus, ovary and brain. Detected at lower levels in heart, placenta, small intestine, colon, liver, kidney, skeletal muscle and pancreas. Not detectable in primary tumors from breast and prostate and in many cancer cell lines.

It localises to the cytoplasm. It is found in the cell membrane. The protein resides in the cell projection. Its subcellular location is the dendritic spine. The protein localises to the postsynaptic density. It localises to the synapse. Functionally, involved in the regulation of cell growth. May stabilize the active CDC2-cyclin B1 complex and thereby contribute to the regulation of the cell cycle and the prevention of uncontrolled cell proliferation. May act as a tumor suppressor. The chain is Leucine zipper putative tumor suppressor 1 (LZTS1) from Homo sapiens (Human).